The primary structure comprises 212 residues: Large ribosomal subunit protein uL3 (212 aa).

A disordered region spans residues 119–147 (YQGNIKRWGQSRGPETHGSRYHRIPGSMG).

This sequence belongs to the universal ribosomal protein uL3 family. As to quaternary structure, part of the 50S ribosomal subunit. Forms a cluster with proteins L14 and L19.

In terms of biological role, one of the primary rRNA binding proteins, it binds directly near the 3'-end of the 23S rRNA, where it nucleates assembly of the 50S subunit. In Lactobacillus acidophilus (strain ATCC 700396 / NCK56 / N2 / NCFM), this protein is Large ribosomal subunit protein uL3.